Consider the following 289-residue polypeptide: B- and T-lymphocyte attenuator (289 aa).

The first 30 residues, 1 to 30 (MKTLPAMLGTGKLFWVFFLIPYLDIWNIHG), serve as a signal peptide directing secretion. An Ig-like V-type domain is found at 31-132 (KESCDVQLYI…LIESHSTTLY (102 aa)). Residues 31–157 (KESCDVQLYI…MASRPWLLYR (127 aa)) are Extracellular-facing. Intrachain disulfides connect cysteine 34-cysteine 63, cysteine 58-cysteine 115, and cysteine 72-cysteine 79. 3 N-linked (GlcNAc...) asparagine glycosylation sites follow: asparagine 75, asparagine 94, and asparagine 110. Residues 158-178 (LLPLGGLPLLITTCFCLFCCL) form a helical membrane-spanning segment. Residues 179 to 289 (RRHQGKQNEL…TEYASICVRS (111 aa)) lie on the Cytoplasmic side of the membrane.

As to quaternary structure, interacts with tyrosine phosphatases PTPN6/SHP-1 and PTPN11/SHP-2. Interacts with TNFRSF14/HVEM (via cysteine-rich domain 1). Phosphorylated on Tyr residues by TNFRSF14 and by antigen receptors cross-linking, both inducing association with PTPN6 and PTPN11. Post-translationally, N-glycosylated.

The protein localises to the cell membrane. Functionally, inhibitory receptor on lymphocytes that negatively regulates antigen receptor signaling via PTPN6/SHP-1 and PTPN11/SHP-2. May interact in cis (on the same cell) or in trans (on other cells) with TNFRSF14. In cis interactions, appears to play an immune regulatory role inhibiting in trans interactions in naive T cells to maintain a resting state. In trans interactions, can predominate during adaptive immune response to provide survival signals to effector T cells. The sequence is that of B- and T-lymphocyte attenuator from Homo sapiens (Human).